The following is a 742-amino-acid chain: CD44 antigen (742 aa).

The signal sequence occupies residues 1 to 20; sequence MDKFWWHAAWGLCLVPLSLA. The Extracellular segment spans residues 21-649; the sequence is QIDLNITCRF…GPIRTPQIPE (629 aa). The N-linked (GlcNAc...) asparagine glycan is linked to Asn-25. Disulfide bonds link Cys-28–Cys-129, Cys-53–Cys-118, and Cys-77–Cys-97. A Link domain is found at 32 to 120; the sequence is GVFHVEKNGR…TSQYDTYCFN (89 aa). Arg-41 is a binding site for hyaluronan. An N-linked (GlcNAc...) asparagine glycan is attached at Asn-57. Hyaluronan-binding residues include Arg-78 and Tyr-79. The N-linked (GlcNAc...) asparagine glycan is linked to Asn-100. Tyr-105 provides a ligand contact to hyaluronan. 2 N-linked (GlcNAc...) asparagine glycosylation sites follow: Asn-110 and Asn-120. 2 disordered regions span residues 160 to 189 and 261 to 285; these read EYRT…RSST and TTQM…NEDE. Low complexity predominate over residues 179–189; sequence SSGSSSERSST. Residue Ser-180 is glycosylated (O-linked (Xyl...) (chondroitin sulfate) serine). The interval 224–649 is stem; sequence LMSTSATATE…GPIRTPQIPE (426 aa). Positions 261–273 are enriched in polar residues; that stretch reads TTQMAGTSSNTIS. The N-linked (GlcNAc...) asparagine glycan is linked to Asn-350. 2 disordered regions span residues 372–558 and 590–642; these read HHEE…TLLE and TVGD…SGPI. The span at 386-396 shows a compositional bias: low complexity; that stretch reads QATPSSTTEET. Residues 407–421 show a composition bias toward basic and acidic residues; it reads RWHEGYRQTPKEDSH. Over residues 422–435 the composition is skewed to low complexity; it reads STTGTAAASAHTSH. Polar residues-rich tracts occupy residues 439–452 and 476–489; these read GRTT…SWTD and SHSI…NPNT. Residues 502–516 are compositionally biased toward low complexity; the sequence is SMTTQQSNSQSFSTS. Residues 528–539 show a composition bias toward polar residues; sequence TTSTLTSSNRND. N-linked (GlcNAc...) asparagine glycosylation is found at Asn-548 and Asn-599. Residues 592-606 show a composition bias toward polar residues; sequence GDSNSNVNRSLSGDQ. Over residues 619-629 the composition is skewed to basic and acidic residues; that stretch reads HGSESDGHSHG. Asn-636 carries an N-linked (GlcNAc...) asparagine glycan. A helical membrane pass occupies residues 650–670; the sequence is WLIILASLLALALILAVCIAV. At 671-742 the chain is on the cytoplasmic side; that stretch reads NSRRRCGQKK…LQNVDMKIGV (72 aa). Ser-672 carries the phosphoserine; by PKC modification. Residues 673 to 691 are required for interaction with EZR, MSN and RDX and for co-localization to microvilli; that stretch reads RRRCGQKKKLVINSGNGAV. Phosphoserine is present on residues Ser-686, Ser-697, and Ser-706.

As to quaternary structure, interacts with PKN2. Interacts with TIAM1 and TIAM2. Interacts with HA, as well as other glycosaminoglycans, collagen, laminin, and fibronectin via its N-terminal segment. Interacts with UNC119. Interacts with PDPN (via extracellular domain); this interaction is required for PDPN-mediated directional migration and regulation of lamellipodia extension/stabilization during cell spreading and migration. Interacts with RDX, EZR and MSN. Interacts with EGFR. Interacts with CD74; this complex is essential for the MIF-induced signaling cascade that results in B cell survival. Proteolytically cleaved in the extracellular matrix by specific proteinases (possibly MMPs) in several cell lines and tumors. Post-translationally, N-glycosylated. In terms of processing, O-glycosylated; contains chondroitin sulfate glycans which can be more or less sulfated and whose number may affect the accessibility of specific proteinases to their cleavage site(s). It is uncertain if O-glycosylation occurs on Thr-637 or Thr-638. Phosphorylated; activation of PKC results in the dephosphorylation of Ser-706 (constitutive phosphorylation site), and the phosphorylation of Ser-672. Detected in fibroblasts and urine (at protein level). Detected in placenta (at protein level). Isoform 10 (epithelial isoform) is expressed by cells of epithelium and highly expressed by carcinomas. Expression is repressed in neuroblastoma cells.

The protein resides in the cell membrane. It localises to the cell projection. Its subcellular location is the microvillus. It is found in the secreted. In terms of biological role, cell-surface receptor that plays a role in cell-cell interactions, cell adhesion and migration, helping them to sense and respond to changes in the tissue microenvironment. Participates thereby in a wide variety of cellular functions including the activation, recirculation and homing of T-lymphocytes, hematopoiesis, inflammation and response to bacterial infection. Engages, through its ectodomain, extracellular matrix components such as hyaluronan/HA, collagen, growth factors, cytokines or proteases and serves as a platform for signal transduction by assembling, via its cytoplasmic domain, protein complexes containing receptor kinases and membrane proteases. Such effectors include PKN2, the RhoGTPases RAC1 and RHOA, Rho-kinases and phospholipase C that coordinate signaling pathways promoting calcium mobilization and actin-mediated cytoskeleton reorganization essential for cell migration and adhesion. In Homo sapiens (Human), this protein is CD44 antigen (CD44).